Consider the following 839-residue polypeptide: Protein translocase subunit SecA (839 aa).

ATP-binding positions include Q86, 104–108 (GEGKT), and D493. The segment at 794-839 (GIDMDNLQTSGPSDRPDPETSGDADPKNRAQRRAQEQERKRQNKKQ) is disordered. Positions 807–833 (DRPDPETSGDADPKNRAQRRAQEQERK) are enriched in basic and acidic residues.

This sequence belongs to the SecA family. Monomer and homodimer. Part of the essential Sec protein translocation apparatus which comprises SecA, SecYEG and auxiliary proteins SecDF. Other proteins may also be involved.

Its subcellular location is the cell membrane. The protein localises to the cytoplasm. The enzyme catalyses ATP + H2O + cellular proteinSide 1 = ADP + phosphate + cellular proteinSide 2.. Its function is as follows. Part of the Sec protein translocase complex. Interacts with the SecYEG preprotein conducting channel. Has a central role in coupling the hydrolysis of ATP to the transfer of proteins into and across the cell membrane, serving as an ATP-driven molecular motor driving the stepwise translocation of polypeptide chains across the membrane. This is Protein translocase subunit SecA from Brevibacillus brevis (strain 47 / JCM 6285 / NBRC 100599).